The following is a 37-amino-acid chain: Large ribosomal subunit protein bL36 (37 aa).

This sequence belongs to the bacterial ribosomal protein bL36 family.

The sequence is that of Large ribosomal subunit protein bL36 from Desulfotalea psychrophila (strain LSv54 / DSM 12343).